A 666-amino-acid chain; its full sequence is Endogenous retrovirus group K member 10 Gag polyprotein (666 aa).

Glycine 2 carries N-myristoyl glycine lipidation. The interval glutamate 164–proline 183 is disordered. CCHC-type zinc fingers lie at residues glycine 544–valine 561 and aspartate 580–serine 597. Residues lysine 598–serine 642 form a disordered region. A compositionally biased stretch (polar residues) spans glutamine 604 to glycine 622. Residues phenylalanine 624 to proline 640 show a composition bias toward low complexity.

The protein belongs to the beta type-B retroviral Gag protein family. HERV class-II K(HML-2) gag subfamily. Post-translationally, myristoylation is essential for retroviral assembly. Alteration of the glycine residue leads to a block in the budding of particles and an accumulation of Gag inside the cell. Specific enzymatic cleavages may yield mature proteins.

The protein localises to the cell membrane. Its function is as follows. The products of the Gag polyproteins of infectious retroviruses perform highly complex orchestrated tasks during the assembly, budding, maturation, and infection stages of the viral replication cycle. During viral assembly, the proteins form membrane associations and self-associations that ultimately result in budding of an immature virion from the infected cell. Gag precursors also function during viral assembly to selectively bind and package two plus strands of genomic RNA. Endogenous Gag proteins may have kept, lost or modified their original function during evolution. This chain is Endogenous retrovirus group K member 10 Gag polyprotein (ERVK-10), found in Homo sapiens (Human).